The sequence spans 342 residues: Small GTPase LIP1 (342 aa).

Residues 12-285 are small GTPase-like; it reads KEQILAPLCG…FHGDPYKYNN (274 aa). GTP is bound by residues 29–36, 90–94, and 160–163; these read GDSGVGKT, DVSGH, and NKAD. 2 disordered regions span residues 274–313 and 323–342; these read TSFHGDPYKYNNTIPPLPAQRNLTPPPTLYPQQPVSTPDN and SVQETTNNGSARSKRMDINV. A compositionally biased stretch (polar residues) spans 323-333; the sequence is SVQETTNNGSA.

Belongs to the small GTPase superfamily.

Its subcellular location is the nucleus. The protein resides in the cytoplasm. Functionally, functional small GTPase that acts as a negative factor controlling the light-dependent period shortening of circadian rhythms and light-induced phase resetting during the subjective night. May protect the clock from excessive or mistimed light. Suppresses red and blue light-mediated photomorphogenesis and is required for light-controlled inhibition of endoreplication and tolerance to salt stress. The entrainment of the circadian clock is independent from the other pleiotropic effects. Could be a regulator of seedling establishment. This Arabidopsis thaliana (Mouse-ear cress) protein is Small GTPase LIP1.